Here is a 370-residue protein sequence, read N- to C-terminus: Phospho-2-dehydro-3-deoxyheptonate aldolase, phenylalanine-inhibited (370 aa).

It belongs to the class-I DAHP synthase family.

The catalysed reaction is D-erythrose 4-phosphate + phosphoenolpyruvate + H2O = 7-phospho-2-dehydro-3-deoxy-D-arabino-heptonate + phosphate. The protein operates within metabolic intermediate biosynthesis; chorismate biosynthesis; chorismate from D-erythrose 4-phosphate and phosphoenolpyruvate: step 1/7. With respect to regulation, inhibited by phenyalanine. Stereospecific condensation of phosphoenolpyruvate (PEP) and D-erythrose-4-phosphate (E4P) giving rise to 3-deoxy-D-arabino-heptulosonate-7-phosphate (DAHP). The protein is Phospho-2-dehydro-3-deoxyheptonate aldolase, phenylalanine-inhibited (ARO3) of Saccharomyces cerevisiae (strain ATCC 204508 / S288c) (Baker's yeast).